The chain runs to 397 residues: Phosphoglycerate kinase (397 aa).

Substrate is bound by residues 23 to 25, arginine 38, 61 to 64, arginine 122, and arginine 155; these read DFN and HMGK. ATP-binding positions include lysine 206, glycine 296, glutamate 327, and 353–356; that span reads GGDS.

This sequence belongs to the phosphoglycerate kinase family. As to quaternary structure, monomer.

It localises to the cytoplasm. The enzyme catalyses (2R)-3-phosphoglycerate + ATP = (2R)-3-phospho-glyceroyl phosphate + ADP. Its pathway is carbohydrate degradation; glycolysis; pyruvate from D-glyceraldehyde 3-phosphate: step 2/5. The sequence is that of Phosphoglycerate kinase from Clostridium perfringens (strain SM101 / Type A).